A 428-amino-acid polypeptide reads, in one-letter code: Adenosylmethionine-8-amino-7-oxononanoate aminotransferase (428 aa).

Trp52 lines the substrate pocket. 112-113 (GS) serves as a coordination point for pyridoxal 5'-phosphate. Tyr144 lines the substrate pocket. A pyridoxal 5'-phosphate-binding site is contributed by Asp245. Residues Lys274 and Gly307 each coordinate substrate. Lys274 is modified (N6-(pyridoxal phosphate)lysine). 308–309 (PT) is a pyridoxal 5'-phosphate binding site. Residue Arg391 coordinates substrate.

The protein belongs to the class-III pyridoxal-phosphate-dependent aminotransferase family. BioA subfamily. Homodimer. Pyridoxal 5'-phosphate serves as cofactor.

It localises to the cytoplasm. The enzyme catalyses (8S)-8-amino-7-oxononanoate + S-adenosyl-L-methionine = S-adenosyl-4-methylsulfanyl-2-oxobutanoate + (7R,8S)-7,8-diammoniononanoate. Its pathway is cofactor biosynthesis; biotin biosynthesis; 7,8-diaminononanoate from 8-amino-7-oxononanoate (SAM route): step 1/1. Catalyzes the transfer of the alpha-amino group from S-adenosyl-L-methionine (SAM) to 7-keto-8-aminopelargonic acid (KAPA) to form 7,8-diaminopelargonic acid (DAPA). It is the only aminotransferase known to utilize SAM as an amino donor. This chain is Adenosylmethionine-8-amino-7-oxononanoate aminotransferase, found in Buchnera aphidicola subsp. Acyrthosiphon pisum (strain APS) (Acyrthosiphon pisum symbiotic bacterium).